A 228-amino-acid polypeptide reads, in one-letter code: CD302 antigen (228 aa).

Residues 1–20 form the signal peptide; the sequence is MPHAALSSLVLLSLATAIVA. The Extracellular segment spans residues 21–165; the sequence is DCPSSTWVQF…YDKKYLSDNH (145 aa). Residues 30–149 enclose the C-type lectin domain; it reads FQGSCYAFLQ…CEISSVEGTL (120 aa). Asn107 carries an N-linked (GlcNAc...) asparagine glycan. A disulfide bridge connects residues Cys125 and Cys140. Residues 166–186 traverse the membrane as a helical segment; that stretch reads ILISTLVIASTVTLAVLGAII. Residues 187 to 228 are Cytoplasmic-facing; it reads WFLYRRNARSGFTSFSPAPLSPYSDGCALVVAEEDEYAVQLD.

Its subcellular location is the membrane. The protein resides in the cell projection. It localises to the filopodium. The protein localises to the cytoplasm. It is found in the cell cortex. Its subcellular location is the microvillus. Potential multifunctional C-type lectin receptor that may play roles in endocytosis and phagocytosis as well as in cell adhesion and migration. In Mus musculus (Mouse), this protein is CD302 antigen (Cd302).